The following is a 126-amino-acid chain: DNA-directed RNA polymerase subunit omega (126 aa).

The protein belongs to the RNA polymerase subunit omega family. As to quaternary structure, the RNAP catalytic core consists of 2 alpha, 1 beta, 1 beta' and 1 omega subunit. When a sigma factor is associated with the core the holoenzyme is formed, which can initiate transcription.

It carries out the reaction RNA(n) + a ribonucleoside 5'-triphosphate = RNA(n+1) + diphosphate. In terms of biological role, promotes RNA polymerase assembly. Latches the N- and C-terminal regions of the beta' subunit thereby facilitating its interaction with the beta and alpha subunits. The protein is DNA-directed RNA polymerase subunit omega of Rickettsia felis (strain ATCC VR-1525 / URRWXCal2) (Rickettsia azadi).